Consider the following 262-residue polypeptide: Adenosylcobinamide-GDP ribazoletransferase (262 aa).

6 consecutive transmembrane segments (helical) span residues Tyr-43–Gln-63, Leu-66–Phe-86, Gly-120–Leu-140, Ala-146–Phe-166, Leu-191–Leu-211, and Ala-242–Leu-262.

Belongs to the CobS family. The cofactor is Mg(2+).

Its subcellular location is the cell inner membrane. It catalyses the reaction alpha-ribazole + adenosylcob(III)inamide-GDP = adenosylcob(III)alamin + GMP + H(+). It carries out the reaction alpha-ribazole 5'-phosphate + adenosylcob(III)inamide-GDP = adenosylcob(III)alamin 5'-phosphate + GMP + H(+). It functions in the pathway cofactor biosynthesis; adenosylcobalamin biosynthesis; adenosylcobalamin from cob(II)yrinate a,c-diamide: step 7/7. Joins adenosylcobinamide-GDP and alpha-ribazole to generate adenosylcobalamin (Ado-cobalamin). Also synthesizes adenosylcobalamin 5'-phosphate from adenosylcobinamide-GDP and alpha-ribazole 5'-phosphate. The chain is Adenosylcobinamide-GDP ribazoletransferase from Shewanella sp. (strain ANA-3).